A 145-amino-acid polypeptide reads, in one-letter code: UI (145 aa).

Residues 1–22 (MKPVPLVLLITSVLLTTHIPLS) form the signal peptide. Val143 is subject to Valine amide.

The protein belongs to the sauvagine/corticotropin-releasing factor/urotensin I family.

Its subcellular location is the secreted. In terms of biological role, urotensin is found in the teleost caudal neurosecretory system. It has a suggested role in osmoregulation and as a corticotropin-releasing factor. The non-hormonal portion of this precursor may be a urotensin binding protein, urophysin. This Carassius auratus (Goldfish) protein is UI.